Reading from the N-terminus, the 258-residue chain is Translocon-associated protein subunit alpha (258 aa).

A signal peptide spans 1–24 (MMNLRVLFLALLLLASPLLQVARC). Residues 25–190 (QSDAEDHSSL…ESGGLLSGES (166 aa)) lie on the Lumenal side of the membrane. Asparagine 57, asparagine 119, and asparagine 127 each carry an N-linked (GlcNAc...) asparagine glycan. The helical transmembrane segment at 191–209 (VFLLTLGIGLLLLLGLWAY) threads the bilayer. The Cytoplasmic portion of the chain corresponds to 210–258 (SQVQRLTKKTKKVSKVEVGTRSTEASLDEWLEGTTLAKTSSGKTKNKKN).

Belongs to the TRAP-alpha family. In terms of assembly, heterotetramer of TRAP-alpha, TRAP-beta, TRAP-delta and TRAP-gamma. In terms of processing, phosphorylated in its cytoplasmic tail.

The protein resides in the endoplasmic reticulum membrane. In terms of biological role, TRAP proteins are part of a complex whose function is to bind calcium to the ER membrane and thereby regulate the retention of ER resident proteins. May be involved in the recycling of the translocation apparatus after completion of the translocation process or may function as a membrane-bound chaperone facilitating folding of translocated proteins. This is Translocon-associated protein subunit alpha from Arabidopsis thaliana (Mouse-ear cress).